The primary structure comprises 472 residues: 2-methylcitrate synthase, mitochondrial (472 aa).

Residues 1 to 29 constitute a mitochondrion transit peptide; it reads MALNLTSSRRALGSLKPLTRAAFSGVRGY. Arg75 and Lys193 together coordinate CoA. His271 contributes to the oxaloacetate binding site. Leu306 is a binding site for CoA. His307 is an active-site residue. Positions 348, 350, and 351 each coordinate CoA. Oxaloacetate is bound by residues His353 and Arg362. The active site involves His353. The CoA site is built by Thr402, Lys403, and Asn408. Asp410 is an active-site residue. 2 residues coordinate oxaloacetate: Arg436 and Arg456.

Belongs to the citrate synthase family. In terms of assembly, homodimer.

Its subcellular location is the mitochondrion matrix. It carries out the reaction propanoyl-CoA + oxaloacetate + H2O = (2S,3S)-2-methylcitrate + CoA + H(+). The catalysed reaction is oxaloacetate + acetyl-CoA + H2O = citrate + CoA + H(+). Its pathway is organic acid metabolism; propanoate degradation. In terms of biological role, component of the methylcitrate cycle that catalyzes the synthesis of (2S,3S)-2-methylcitrate from propionyl-CoA and oxaloacetate. Plays an important role in detoxification of propionyl-CoA, an inhibitor of both primary and secondary metabolism. Also has citrate synthase activity using as substrates acetyl-CoA and oxaloacetate. The polypeptide is 2-methylcitrate synthase, mitochondrial (Gibberella moniliformis (Maize ear and stalk rot fungus)).